A 139-amino-acid polypeptide reads, in one-letter code: Putative nickel-responsive regulator (139 aa).

Residues H79, H90, H92, and C98 each contribute to the Ni(2+) site.

Belongs to the transcriptional regulatory CopG/NikR family. Ni(2+) is required as a cofactor.

Transcriptional regulator. The protein is Putative nickel-responsive regulator of Geobacter sulfurreducens (strain ATCC 51573 / DSM 12127 / PCA).